Reading from the N-terminus, the 220-residue chain is Ribose-5-phosphate isomerase A (220 aa).

Substrate-binding positions include 28–31 (TGST), 81–84 (DGAD), and 94–97 (KGGG). Catalysis depends on Glu-103, which acts as the Proton acceptor. Lys-121 contributes to the substrate binding site.

The protein belongs to the ribose 5-phosphate isomerase family. As to quaternary structure, homodimer.

The enzyme catalyses aldehydo-D-ribose 5-phosphate = D-ribulose 5-phosphate. It functions in the pathway carbohydrate degradation; pentose phosphate pathway; D-ribose 5-phosphate from D-ribulose 5-phosphate (non-oxidative stage): step 1/1. Its function is as follows. Catalyzes the reversible conversion of ribose-5-phosphate to ribulose 5-phosphate. In Shewanella putrefaciens (strain CN-32 / ATCC BAA-453), this protein is Ribose-5-phosphate isomerase A.